The chain runs to 149 residues: Small ribosomal subunit protein uS13 (149 aa).

It belongs to the universal ribosomal protein uS13 family. As to quaternary structure, part of the 30S ribosomal subunit. Forms a loose heterodimer with protein S19. Forms two bridges to the 50S subunit in the 70S ribosome.

Located at the top of the head of the 30S subunit, it contacts several helices of the 16S rRNA. In the 70S ribosome it contacts the 23S rRNA (bridge B1a) and protein L5 of the 50S subunit (bridge B1b), connecting the 2 subunits; these bridges are implicated in subunit movement. The polypeptide is Small ribosomal subunit protein uS13 (Methanococcus maripaludis (strain DSM 14266 / JCM 13030 / NBRC 101832 / S2 / LL)).